A 567-amino-acid chain; its full sequence is Platelet glycoprotein V (567 aa).

An N-terminal signal peptide occupies residues 1–16 (MLRSALLSAVLPLLRA). The 34-residue stretch at 17–50 (QPFPCPKTCKCVVRDAAQCSGGSVAHIAELGLPT) folds into the LRRNT domain. The Extracellular portion of the chain corresponds to 17 to 522 (QPFPCPKTCK…ESPNNRLYWG (506 aa)). Residues Asn51 and Asn67 are each glycosylated (N-linked (GlcNAc...) asparagine). 14 LRR repeats span residues 75 to 96 (VLQR…TFND), 99 to 120 (KLKT…ILDK), 123 to 144 (LLEQ…LFQQ), 147 to 168 (NLQE…LFSS), 171 to 193 (ELKL…LGAQ), 195 to 216 (KLEK…LLSN), 219 to 240 (ALTE…AFDR), 243 to 264 (NLSS…LFLH), 267 to 288 (SVSR…LFGE), 291 to 312 (GLRE…AFRN), 315 to 337 (GLQT…VFQG), 340 to 361 (ELRV…ALRG), 364 to 385 (HLRQ…LFRN), and 388 to 409 (SLES…VFAA). An N-linked (GlcNAc...) asparagine glycan is attached at Asn181. An N-linked (GlcNAc...) asparagine glycan is attached at Asn243. N-linked (GlcNAc...) asparagine glycans are attached at residues Asn298 and Asn312. Asn385 is a glycosylation site (N-linked (GlcNAc...) asparagine). The region spanning 421 to 474 (NPWLCDCGLWRFLQWLRHHPDILGRDEPPQCRGPEPRASLSFWELLQGDPWCPD) is the LRRCT domain. Residues 523–543 (LYILLLVAQAIIAAFIVFAMI) traverse the membrane as a helical segment. The Cytoplasmic segment spans residues 544-567 (KIGQLFRTLIREKLLLEAMGKSCN).

Its subcellular location is the membrane. In terms of biological role, the GPIb-V-IX complex functions as the vWF receptor and mediates vWF-dependent platelet adhesion to blood vessels. The adhesion of platelets to injured vascular surfaces in the arterial circulation is a critical initiating event in hemostasis. The polypeptide is Platelet glycoprotein V (Gp5) (Mus musculus (Mouse)).